Consider the following 239-residue polypeptide: RBPJ-interacting and tubulin-associated protein 1 (239 aa).

Residues 12–24 (LDLSITGHSTALP) carry the Nuclear export signal motif. Disordered regions lie at residues 62-97 (APPSQTPLLWSPGEIKENKKTSSCRPKSTPAGTPRK) and 149-239 (LVQQ…PPWK). The Nuclear localization signal motif lies at 93–109 (GTPRKKIQYRVKSRTPS). Residues 129–158 (WVKKEDTVKIRPLLWSPSPRLVQQSSMQNA) form an interaction with RBPJ/RBPSUH region. Polar residues-rich tracts occupy residues 149–159 (LVQQSSMQNAK) and 203–221 (RQRQSTPGRETVRSASCSG). Residues 158 to 239 (AKQGPLRAVH…VKMQERPPWK (82 aa)) form an interaction with tubulin region.

This sequence belongs to the RITA family. As to quaternary structure, interacts with rbpj/rbpsuh.

The protein resides in the cytoplasm. It is found in the nucleus. Functionally, tubulin-binding protein that acts as a negative regulator of Notch signaling pathway. Shuttles between the cytoplasm and the nucleus and mediates the nuclear export of rbpj/rbpsuh, thereby preventing the interaction between rbpj/rbpsuh and NICD product of Notch proteins (Notch intracellular domain), leading to down-regulate Notch-mediated transcription. May play a role in neurogenesis. This chain is RBPJ-interacting and tubulin-associated protein 1 (rita1), found in Xenopus laevis (African clawed frog).